The following is a 154-amino-acid chain: UPF0178 protein H16_B0290 (154 aa).

The protein belongs to the UPF0178 family.

In Cupriavidus necator (strain ATCC 17699 / DSM 428 / KCTC 22496 / NCIMB 10442 / H16 / Stanier 337) (Ralstonia eutropha), this protein is UPF0178 protein H16_B0290.